A 131-amino-acid polypeptide reads, in one-letter code: MKLLLTLLLGSALMCITLADECGLGTHRPVKEVIDNVRTMYYCDCRAGDAERSITVSRCDDNNQKQDDVILTYCGLEQTTGCNTNPYTAAKHDSSGDKPQFYCSCLNYKYEQSHSDYRHWTIRCYMGNICD.

An N-terminal signal peptide occupies residues 1 to 19 (MKLLLTLLLGSALMCITLA). Positions 20–38 (DECGLGTHRPVKEVIDNVR) are excised as a propeptide.

Post-translationally, contains 4 disulfide bonds. Expressed by the venom duct.

It localises to the secreted. Functionally, probable neurotoxin with unknown target. Possibly targets ion channels. This chain is Conotoxin Cal8.1, found in Californiconus californicus (California cone).